We begin with the raw amino-acid sequence, 622 residues long: Phosphatidylinositol 4-kinase gamma 6 (622 aa).

The 58-residue stretch at 38 to 95 (RRVFVQTDTGCVLGVELDRNDNVHTVKKRLQIAFNFPTEESSLTFGDMVLKNDLSAVR) folds into the Ubiquitin-like; degenerate domain. Residues 158 to 459 (GVEPIPVNGG…LTTEQDVLSP (302 aa)) form the PI3K/PI4K catalytic domain. Residues 164–170 (VNGGLGG) are G-loop. Residues 165–171 (NGGLGGA), K186, and 277–280 (QKFV) contribute to the ATP site. A catalytic loop region spans residues 310–318 (LNTDRHGGN). Residues 339-365 (PIDHGLCLPETLEDPYFEWIHWPQASI) are activation loop. D341 is an ATP binding site. S565 carries the post-translational modification Phosphoserine.

It belongs to the PI3/PI4-kinase family. Type II PI4K subfamily.

It catalyses the reaction a 1,2-diacyl-sn-glycero-3-phospho-(1D-myo-inositol) + ATP = a 1,2-diacyl-sn-glycero-3-phospho-(1D-myo-inositol 4-phosphate) + ADP + H(+). The phosphorylation of phosphatidylinositol (PI) to PI4P is the first committed step in the generation of phosphatidylinositol 4,5-bisphosphate (PIP2), a precursor of the second messenger inositol 1,4,5-trisphosphate (InsP3). This chain is Phosphatidylinositol 4-kinase gamma 6 (PI4KG6), found in Arabidopsis thaliana (Mouse-ear cress).